The chain runs to 226 residues: 2-C-methyl-D-erythritol 4-phosphate cytidylyltransferase (226 aa).

Belongs to the IspD/TarI cytidylyltransferase family. IspD subfamily.

It catalyses the reaction 2-C-methyl-D-erythritol 4-phosphate + CTP + H(+) = 4-CDP-2-C-methyl-D-erythritol + diphosphate. The protein operates within isoprenoid biosynthesis; isopentenyl diphosphate biosynthesis via DXP pathway; isopentenyl diphosphate from 1-deoxy-D-xylulose 5-phosphate: step 2/6. Its function is as follows. Catalyzes the formation of 4-diphosphocytidyl-2-C-methyl-D-erythritol from CTP and 2-C-methyl-D-erythritol 4-phosphate (MEP). The protein is 2-C-methyl-D-erythritol 4-phosphate cytidylyltransferase of Actinobacillus pleuropneumoniae serotype 7 (strain AP76).